The sequence spans 327 residues: uncharacterized protein (327 aa).

A helical membrane pass occupies residues 12 to 32 (LVVVVVAIAIFTLVLLMLWEG). The interval 149–170 (AFSAVETSEGSDQESEGADEQG) is disordered. The segment covering 157 to 167 (EGSDQESEGAD) has biased composition (acidic residues). A coiled-coil region spans residues 162 to 227 (ESEGADEQGK…LDEENREVAE (66 aa)).

It localises to the membrane. This is an uncharacterized protein from Encephalitozoon cuniculi (strain GB-M1) (Microsporidian parasite).